The chain runs to 297 residues: 4-hydroxy-tetrahydrodipicolinate synthase (297 aa).

T50 contacts pyruvate. Residue Y138 is the Proton donor/acceptor of the active site. K166 (schiff-base intermediate with substrate) is an active-site residue. Residue I208 coordinates pyruvate.

It belongs to the DapA family. Homotetramer; dimer of dimers.

The protein resides in the cytoplasm. It catalyses the reaction L-aspartate 4-semialdehyde + pyruvate = (2S,4S)-4-hydroxy-2,3,4,5-tetrahydrodipicolinate + H2O + H(+). It functions in the pathway amino-acid biosynthesis; L-lysine biosynthesis via DAP pathway; (S)-tetrahydrodipicolinate from L-aspartate: step 3/4. In terms of biological role, catalyzes the condensation of (S)-aspartate-beta-semialdehyde [(S)-ASA] and pyruvate to 4-hydroxy-tetrahydrodipicolinate (HTPA). The protein is 4-hydroxy-tetrahydrodipicolinate synthase of Haemophilus ducreyi (strain 35000HP / ATCC 700724).